Here is a 282-residue protein sequence, read N- to C-terminus: Phosphatidylserine decarboxylase proenzyme (282 aa).

Active-site charge relay system; for autoendoproteolytic cleavage activity residues include Asp88, His144, and Ser247. The Schiff-base intermediate with substrate; via pyruvic acid; for decarboxylase activity role is filled by Ser247. Position 247 is a pyruvic acid (Ser); by autocatalysis (Ser247).

It belongs to the phosphatidylserine decarboxylase family. PSD-B subfamily. Prokaryotic type I sub-subfamily. In terms of assembly, heterodimer of a large membrane-associated beta subunit and a small pyruvoyl-containing alpha subunit. Requires pyruvate as cofactor. Is synthesized initially as an inactive proenzyme. Formation of the active enzyme involves a self-maturation process in which the active site pyruvoyl group is generated from an internal serine residue via an autocatalytic post-translational modification. Two non-identical subunits are generated from the proenzyme in this reaction, and the pyruvate is formed at the N-terminus of the alpha chain, which is derived from the carboxyl end of the proenzyme. The autoendoproteolytic cleavage occurs by a canonical serine protease mechanism, in which the side chain hydroxyl group of the serine supplies its oxygen atom to form the C-terminus of the beta chain, while the remainder of the serine residue undergoes an oxidative deamination to produce ammonia and the pyruvoyl prosthetic group on the alpha chain. During this reaction, the Ser that is part of the protease active site of the proenzyme becomes the pyruvoyl prosthetic group, which constitutes an essential element of the active site of the mature decarboxylase.

It is found in the cell membrane. It carries out the reaction a 1,2-diacyl-sn-glycero-3-phospho-L-serine + H(+) = a 1,2-diacyl-sn-glycero-3-phosphoethanolamine + CO2. It functions in the pathway phospholipid metabolism; phosphatidylethanolamine biosynthesis; phosphatidylethanolamine from CDP-diacylglycerol: step 2/2. Its function is as follows. Catalyzes the formation of phosphatidylethanolamine (PtdEtn) from phosphatidylserine (PtdSer). This chain is Phosphatidylserine decarboxylase proenzyme, found in Xanthomonas campestris pv. campestris (strain B100).